We begin with the raw amino-acid sequence, 434 residues long: Alpha-enolase (434 aa).

Ser-40 lines the Mg(2+) pocket. Substrate-binding residues include His-158 and Glu-167. The active-site Proton donor is the Glu-210. Positions 245, 293, and 318 each coordinate Mg(2+). 2 residues coordinate substrate: Glu-293 and Asp-318. Lys-343 acts as the Proton acceptor in catalysis. Substrate-binding positions include Ser-370–Ser-373 and Lys-394.

This sequence belongs to the enolase family. As to quaternary structure, homodimer. Mg(2+) is required as a cofactor.

It is found in the cytoplasm. The enzyme catalyses (2R)-2-phosphoglycerate = phosphoenolpyruvate + H2O. It participates in carbohydrate degradation; glycolysis; pyruvate from D-glyceraldehyde 3-phosphate: step 4/5. The polypeptide is Alpha-enolase (ENO1) (Gallus gallus (Chicken)).